Consider the following 309-residue polypeptide: Oxygen-dependent coproporphyrinogen-III oxidase (309 aa).

Ser94 lines the substrate pocket. The a divalent metal cation site is built by His98 and His108. Catalysis depends on His108, which acts as the Proton donor. Substrate is bound at residue 110-112; that stretch reads NVR. A divalent metal cation-binding residues include His147 and His177. An important for dimerization region spans residues 242-277; it reads YVEFNLVWDRGTLFGLQTGGRTESILMSLPPLVRWE. 260–262 serves as a coordination point for substrate; it reads GGR.

It belongs to the aerobic coproporphyrinogen-III oxidase family. In terms of assembly, homodimer. It depends on a divalent metal cation as a cofactor.

Its subcellular location is the cytoplasm. It carries out the reaction coproporphyrinogen III + O2 + 2 H(+) = protoporphyrinogen IX + 2 CO2 + 2 H2O. Its pathway is porphyrin-containing compound metabolism; protoporphyrin-IX biosynthesis; protoporphyrinogen-IX from coproporphyrinogen-III (O2 route): step 1/1. Functionally, involved in the heme biosynthesis. Catalyzes the aerobic oxidative decarboxylation of propionate groups of rings A and B of coproporphyrinogen-III to yield the vinyl groups in protoporphyrinogen-IX. This Yersinia pseudotuberculosis serotype O:1b (strain IP 31758) protein is Oxygen-dependent coproporphyrinogen-III oxidase.